Reading from the N-terminus, the 311-residue chain is Putative HTH-type transcriptional regulatory protein PTO0557 (311 aa).

One can recognise an HTH cro/C1-type domain in the interval 132-186 (MRRIRELKGYSVGYLSSKLGISRRSISLYESGSSATIDIYLKLEETLGEDLTKDI). The segment at residues 143 to 162 (VGYLSSKLGISRRSISLYES) is a DNA-binding region (H-T-H motif).

This Picrophilus torridus (strain ATCC 700027 / DSM 9790 / JCM 10055 / NBRC 100828 / KAW 2/3) protein is Putative HTH-type transcriptional regulatory protein PTO0557.